The chain runs to 486 residues: Protein nucleotidyltransferase YdiU (486 aa).

Gly90, Gly92, Arg93, Lys113, Asp125, Gly126, Arg176, and Arg183 together coordinate ATP. The Proton acceptor role is filled by Asp252. Mg(2+) is bound by residues Asn253 and Asp262. Asp262 contacts ATP.

Belongs to the SELO family. Mg(2+) is required as a cofactor. Mn(2+) serves as cofactor.

It carries out the reaction L-seryl-[protein] + ATP = 3-O-(5'-adenylyl)-L-seryl-[protein] + diphosphate. It catalyses the reaction L-threonyl-[protein] + ATP = 3-O-(5'-adenylyl)-L-threonyl-[protein] + diphosphate. The enzyme catalyses L-tyrosyl-[protein] + ATP = O-(5'-adenylyl)-L-tyrosyl-[protein] + diphosphate. The catalysed reaction is L-histidyl-[protein] + UTP = N(tele)-(5'-uridylyl)-L-histidyl-[protein] + diphosphate. It carries out the reaction L-seryl-[protein] + UTP = O-(5'-uridylyl)-L-seryl-[protein] + diphosphate. It catalyses the reaction L-tyrosyl-[protein] + UTP = O-(5'-uridylyl)-L-tyrosyl-[protein] + diphosphate. Nucleotidyltransferase involved in the post-translational modification of proteins. It can catalyze the addition of adenosine monophosphate (AMP) or uridine monophosphate (UMP) to a protein, resulting in modifications known as AMPylation and UMPylation. This is Protein nucleotidyltransferase YdiU from Pseudomonas putida (strain ATCC 700007 / DSM 6899 / JCM 31910 / BCRC 17059 / LMG 24140 / F1).